The sequence spans 817 residues: MYSKNIIYFNKAFDKIEIKNLINWFLINYGNIKTTKLLDKIKKFGLIHATNAGISIGLNDLIIPPSKKNLVEISNKNLNKINKKFKNGKINLITYLIKEKRTWDNMNENLKIESIKNLKQNDLLNSLYTMTLSGARGNINQVKQLISMRGLISDSQGNLLNLPIKTNFKEGLNIVEYFISCYGARKGIIDTSLKTANAGYLTRRLIFASQNTIIRKTNCFTKYKKKIKIKYETKQEFKLLKEELIGRINVKTIKEKDNNKIIISYGQDICYTFKKILNHNINIYIRTPLNCILTTGICQMCYGWNLATGKIVELGETIGTIAAQSIGEPGTQLTMRTFHLGGIFTSKIKESILSPFTGKIWYDLNKNGKKTYNKFNEKIFLTSKEKKITIYENNINKSIYYLPPNSYIFVRPGEKVFKAQIIAETFDKQKKKENTKFNEVKKIKSNISGKKYINKKNKKFNNLYWILNANFITFNKFYHKLTDKLNFKKKSYTISKNMQDKNKKSKKNLQLKISIKNILNNMEKKKSKTNKKFIFINEILNKNKTIILNKPKKEKIINNKWKIGKFILKDEITNKNRNLYPSQIIQEKKDTSVLKKVTPYRLNDKILDKNPYIMKKNALLYKAVTKKEKNKDIIQGLVEIEKLFEAKKSFIIDKTKNLHEILKDLFVNYNKKYNNSTSTRKSIEIIQKYILEEIQSIYKEQGINISNKHIEIIIKQMTSKVIIKNAGNSPFIVGEICNINSIDNLNKNYEHKIIYEPILLGITKSSLYTQSFISQITFQESIKSLIKAAIENKIDWLYGLKENLILGNLIPIGTGFK.

The Zn(2+) site is built by cysteine 219, cysteine 291, cysteine 298, and cysteine 301.

The protein belongs to the RNA polymerase beta' chain family. RpoC2 subfamily. In terms of assembly, in plastids the minimal PEP RNA polymerase catalytic core is composed of four subunits: alpha, beta, beta', and beta''. When a (nuclear-encoded) sigma factor is associated with the core the holoenzyme is formed, which can initiate transcription. Zn(2+) serves as cofactor.

It localises to the plastid. It carries out the reaction RNA(n) + a ribonucleoside 5'-triphosphate = RNA(n+1) + diphosphate. In terms of biological role, DNA-dependent RNA polymerase catalyzes the transcription of DNA into RNA using the four ribonucleoside triphosphates as substrates. The polypeptide is DNA-directed RNA polymerase subunit beta'' (rpoC2) (Euglena longa (Euglenophycean alga)).